A 121-amino-acid chain; its full sequence is Large ribosomal subunit protein eL8 (121 aa).

This sequence belongs to the eukaryotic ribosomal protein eL8 family. In terms of assembly, part of the 50S ribosomal subunit. Probably part of the RNase P complex.

The protein localises to the cytoplasm. Multifunctional RNA-binding protein that recognizes the K-turn motif in ribosomal RNA, the RNA component of RNase P, box H/ACA, box C/D and box C'/D' sRNAs. The sequence is that of Large ribosomal subunit protein eL8 from Thermoplasma acidophilum (strain ATCC 25905 / DSM 1728 / JCM 9062 / NBRC 15155 / AMRC-C165).